Consider the following 487-residue polypeptide: Glutamyl-tRNA(Gln) amidotransferase subunit A (487 aa).

Catalysis depends on charge relay system residues K79 and S158. S182 functions as the Acyl-ester intermediate in the catalytic mechanism.

The protein belongs to the amidase family. GatA subfamily. In terms of assembly, heterotrimer of A, B and C subunits.

It carries out the reaction L-glutamyl-tRNA(Gln) + L-glutamine + ATP + H2O = L-glutaminyl-tRNA(Gln) + L-glutamate + ADP + phosphate + H(+). Functionally, allows the formation of correctly charged Gln-tRNA(Gln) through the transamidation of misacylated Glu-tRNA(Gln) in organisms which lack glutaminyl-tRNA synthetase. The reaction takes place in the presence of glutamine and ATP through an activated gamma-phospho-Glu-tRNA(Gln). The sequence is that of Glutamyl-tRNA(Gln) amidotransferase subunit A from Ehrlichia ruminantium (strain Welgevonden).